A 235-amino-acid chain; its full sequence is Putative HAD-hydrolase YfnB (235 aa).

Residue D10 is the Nucleophile of the active site.

This sequence belongs to the HAD-like hydrolase superfamily. YjjG family.

The sequence is that of Putative HAD-hydrolase YfnB (yfnB) from Bacillus subtilis (strain 168).